Here is a 3295-residue protein sequence, read N- to C-terminus: Toxin CdiA (3295 aa).

A two-partner system transport domain (TPS) region spans residues 33 to 366 (PSSGVGHTQR…GKGNTQLTTA (334 aa)). The helical transmembrane segment at 55–75 (LLIALGCISLSAQAAIVADGS) threads the bilayer. An FHA-1 region spans residues 353-1574 (GVLYGKGNTQ…LLVYAKTLTN (1222 aa)). The interval 1165 to 1185 (PPSSIPPSSTQSSSTQASASP) is disordered. Residues 1575–1796 (RRQILTATTD…LKTDKGDYAP (222 aa)) form a receptor binding domain (RBD) region. Positions 1797–1977 (GPEAALSLAN…GVKPGDLRAN (181 aa)) are YP domain. Positions 1806–1831 (NISPPSSLDATGPRGVPPPSDDLNRT) are disordered. Positions 1998 to 2035 (GAISASNNLQISMAKDITLNNRCGLLQAGNHLQLSTLN) are periplasmic FHA-1 repeat (pFR). The FHA-2 stretch occupies residues 2022–2676 (LLQAGNHLQL…DRDNYDAKQS (655 aa)). Disordered stretches follow at residues 2260–2292 (TSQT…EGRS) and 2823–2847 (QQNV…FDKE). The span at 2823 to 2838 (QQNVDDLSRDTGNANG) shows a compositional bias: polar residues. A VENN CT cleavage motif motif is present at residues 3073–3076 (VENN). Residues 3073–3295 (VENNLLGGNE…QKKDAMEDSK (223 aa)) form a CT domain region. Residues 3276–3295 (SSEFGSSLIQQKKDAMEDSK) form a disordered region. Positions 3286 to 3295 (QKKDAMEDSK) are enriched in basic and acidic residues.

It in the N-terminal section; belongs to the CdiA toxin family. As to quaternary structure, probably interacts with cognate immunity protein CdiI.

It localises to the membrane. The protein localises to the target cell. It is found in the target cell cytoplasm. Its function is as follows. Toxic component of a toxin-immunity protein module, which functions as a cellular contact-dependent growth inhibition (CDI) system. CDI modules allow bacteria to communicate with and inhibit the growth of closely related neighboring bacteria in a contact-dependent fashion. CDI is neutralized by its cognate immunity protein CdiI, but not by non-cognate CdiI from other bacteria. The CdiA protein is thought to be exported from the cell through the central lumen of CdiB, the other half of its two-partner system (TPS). The TPS domain probably remains associated with CdiB while the FHA-1 domain forms an extended filament with the receptor-binding domain (RBD) at its extremity; in the secretion arrested state the C-terminus of the RBD and YP domains form a hairpin-like structure as the FHA-2, PT and CT domains are periplasmic. The YP domain is probably responsible for this arrest at the point where it re-enters the host cell periplasm. Upon binding to a target cell outer membrane receptor a signal is transmitted to activate secretion. The filament elongates slightly, the rest of CdiA is secreted and the FHA-2 domain becomes stably associated with the target cell's outer membrane where it facilitates entry of the toxic CT domain into the target cell periplasm. From there the toxic CT domain is cleaved and gains access to the target cell cytoplasm via an inner membrane protein. In Yersinia pestis, this protein is Toxin CdiA.